A 443-amino-acid polypeptide reads, in one-letter code: D-lactate dehydrogenase (443 aa).

The Extracellular portion of the chain corresponds to 1-182 (MSWIDELSKI…GGKTIKNSSG (182 aa)). The FAD-binding PCMH-type domain occupies 32 to 209 (RAAENFVVVK…TKATIRLFPQ (178 aa)). A helical transmembrane segment spans residues 183–203 (YSLLHLLVGSEGTLAVITKAT). Topologically, residues 204 to 383 (IRLFPQMRDM…WEKSYFEFRK (180 aa)) are cytoplasmic. The helical transmembrane segment at 384–404 (SLLSLAVSLGGVISGEHGIGA) threads the bilayer. Topologically, residues 405 to 443 (VKLSELEELFPEQFELMRQIKLLFDPKNILNPGKVVRKL) are extracellular.

Belongs to the FAD-binding oxidoreductase/transferase type 4 family. FAD serves as cofactor. Zn(2+) is required as a cofactor.

It localises to the cell membrane. It carries out the reaction (R)-lactate + A = pyruvate + AH2. Its function is as follows. Catalyzes the dehydrogenation of (R)-lactate (D-lactate) to pyruvate. Is likely involved in the utilization of D-lactate as a sole source for both carbon and electrons for dissimilatory sulfate reduction. Cannot use L-lactate as substrate, and NAD(+), horse cytochrome c, methylene blue or dimethylnaphthoquinone as acceptors. Active in vitro with artificial electron acceptors such as 2,6-dichlorophenolindophenol (DCPIP); the physiological acceptor is not known, but potential acceptors include cytochromes or quinones. In Archaeoglobus fulgidus (strain ATCC 49558 / DSM 4304 / JCM 9628 / NBRC 100126 / VC-16), this protein is D-lactate dehydrogenase.